The sequence spans 147 residues: Nucleoside diphosphate kinase (147 aa).

6 residues coordinate ATP: Lys-11, Phe-59, Arg-87, Thr-93, Arg-104, and Asn-114. The active-site Pros-phosphohistidine intermediate is His-117.

Belongs to the NDK family. As to quaternary structure, homotetramer. Mg(2+) is required as a cofactor.

It localises to the cytoplasm. It catalyses the reaction a 2'-deoxyribonucleoside 5'-diphosphate + ATP = a 2'-deoxyribonucleoside 5'-triphosphate + ADP. The enzyme catalyses a ribonucleoside 5'-diphosphate + ATP = a ribonucleoside 5'-triphosphate + ADP. Functionally, major role in the synthesis of nucleoside triphosphates other than ATP. The ATP gamma phosphate is transferred to the NDP beta phosphate via a ping-pong mechanism, using a phosphorylated active-site intermediate. This chain is Nucleoside diphosphate kinase, found in Anaeromyxobacter dehalogenans (strain 2CP-1 / ATCC BAA-258).